The chain runs to 365 residues: Succinyl-diaminopimelate desuccinylase (365 aa).

H64 is a Zn(2+) binding site. D66 is an active-site residue. A Zn(2+)-binding site is contributed by D95. E125 acts as the Proton acceptor in catalysis. 3 residues coordinate Zn(2+): E126, E154, and H339.

This sequence belongs to the peptidase M20A family. DapE subfamily. As to quaternary structure, homodimer. The cofactor is Zn(2+). It depends on Co(2+) as a cofactor.

It catalyses the reaction N-succinyl-(2S,6S)-2,6-diaminopimelate + H2O = (2S,6S)-2,6-diaminopimelate + succinate. It functions in the pathway amino-acid biosynthesis; L-lysine biosynthesis via DAP pathway; LL-2,6-diaminopimelate from (S)-tetrahydrodipicolinate (succinylase route): step 3/3. Functionally, catalyzes the hydrolysis of N-succinyl-L,L-diaminopimelic acid (SDAP), forming succinate and LL-2,6-diaminopimelate (DAP), an intermediate involved in the bacterial biosynthesis of lysine and meso-diaminopimelic acid, an essential component of bacterial cell walls. The sequence is that of Succinyl-diaminopimelate desuccinylase from Nautilia profundicola (strain ATCC BAA-1463 / DSM 18972 / AmH).